Here is a 359-residue protein sequence, read N- to C-terminus: WAT1-related protein At4g28040 (359 aa).

The next 10 helical transmembrane spans lie at leucine 10–phenylalanine 30, threonine 37–isoleucine 57, proline 66–valine 86, alanine 103–phenylalanine 123, serine 133–leucine 153, tryptophan 170–leucine 190, threonine 204–glycine 224, serine 240–valine 260, valine 266–tyrosine 286, and tyrosine 292–glycine 312. An EamA 1 domain is found at threonine 18–methionine 131. One can recognise an EamA 2 domain in the interval proline 199–leucine 310.

The protein belongs to the drug/metabolite transporter (DMT) superfamily. Plant drug/metabolite exporter (P-DME) (TC 2.A.7.4) family.

Its subcellular location is the membrane. In Arabidopsis thaliana (Mouse-ear cress), this protein is WAT1-related protein At4g28040.